The following is a 519-amino-acid chain: MLAMHCARVCSVLMGCRTTTRALSIRSFPGVTLAQIDEEVAKLLELKAHLGGDDGKHQFVLKTAKGTRDYNPKQMAIREKVFNTIVSCFKRHGAETIDTPVFELKETLTGKYGEDSKLIYDLKDQGGELLSLRYDLTVPFARYLAMNKITNIKRYHIAKVYRRDNPAMTRGRYREFYQCDFDIAGQYDAMIPDAECLKIVHEILSELDLGDFRIKVNDRRILDGMFAVCGVPDNMFRTICSTVDKLDKLPWEAVKNEMVNEKGLSEEAADQIGVYVGMQGGMDLAERLLQDQKMCQSTQACAGLTDIKLLFSYLQLFQVTDKVVFDLSLARGLDYYTGIIYEAILTQAGVAPVAPETSNEAPTEECVTVGSVAGGGRYDGLVGMFDPKGRKVPCVGVSIGIERIFSIMEQKAEASTEKIRTTEVQVMVAAAQKNLLEERLRLITELWNAGIKAELMYKKSPKLLSQLQHCEESGIPLVAILGEQELKNGVVKLRNVATRDEVDISRADLIAEIKKRTSA.

L-histidine is bound by residues Asp135–Thr137, Arg162, Gln178, Asp182, Arg331, and Tyr335–Tyr336.

It belongs to the class-II aminoacyl-tRNA synthetase family. In terms of assembly, homodimer.

It localises to the cytoplasm. It carries out the reaction tRNA(His) + L-histidine + ATP = L-histidyl-tRNA(His) + AMP + diphosphate + H(+). In terms of biological role, catalyzes the ATP-dependent ligation of histidine to the 3'-end of its cognate tRNA, via the formation of an aminoacyl-adenylate intermediate (His-AMP). Plays a role in axon guidance. In Takifugu rubripes (Japanese pufferfish), this protein is Histidine--tRNA ligase, cytoplasmic (hars1).